A 584-amino-acid chain; its full sequence is uncharacterized protein (584 aa).

PbH1 repeat units follow at residues 100-128, 139-161, 173-195, 196-225, 236-266, 313-333, 334-356, 357-382, 406-427, 456-478, and 529-554; these read QENITISGGQIIGERDEHTYASAGIRSTH, CSNVVIDDVKISDFTGDGIIVSP, SEQIIIRRCEVRRSRRNNISITG, CDMVTVEECLIEDAGTGNGTAPKFGIDIEG, PINVSIRNNHFVGNVSSSVTNFNGYGILIEG, TSDAVIAGNLITGFSTGIDVR, GKSVLVTNNKISNFENTGILVYQ, SSDVKVDGNQIQNGLSETRRSIGLRA, GGNMIIKDNLLRKFSRGIWIAQ, NAGAIIKNNTFKEFKNYPIYCST, and SAGSIISGNTINNLSAGTATAIQTNT.

This is an uncharacterized protein from Bacillus subtilis (strain 168).